We begin with the raw amino-acid sequence, 136 residues long: Large ribosomal subunit protein uL16c (136 aa).

This sequence belongs to the universal ribosomal protein uL16 family. Part of the 50S ribosomal subunit.

It is found in the plastid. Its subcellular location is the chloroplast. This chain is Large ribosomal subunit protein uL16c, found in Oryza sativa (Rice).